The following is a 348-amino-acid chain: Eukaryotic translation initiation factor 3 subunit F (348 aa).

One can recognise an MPN domain in the interval 30–166 (VVIQPQAIFS…TRTYISAPVG (137 aa)). Over residues 312 to 327 (STAIGGTGAESGGQRG) the composition is skewed to gly residues. The disordered stretch occupies residues 312-348 (STAIGGTGAESGGQRGGQRNNRQRGGQQRNQAEELRA). Positions 328–341 (GQRNNRQRGGQQRN) are enriched in low complexity.

The protein belongs to the eIF-3 subunit F family. As to quaternary structure, component of the eukaryotic translation initiation factor 3 (eIF-3) complex.

Its subcellular location is the cytoplasm. Functionally, component of the eukaryotic translation initiation factor 3 (eIF-3) complex, which is involved in protein synthesis of a specialized repertoire of mRNAs and, together with other initiation factors, stimulates binding of mRNA and methionyl-tRNAi to the 40S ribosome. The eIF-3 complex specifically targets and initiates translation of a subset of mRNAs involved in cell proliferation. The polypeptide is Eukaryotic translation initiation factor 3 subunit F (Coccidioides immitis (strain RS) (Valley fever fungus)).